The sequence spans 222 residues: Sugar fermentation stimulation protein homolog (222 aa).

The protein belongs to the SfsA family.

This Thermotoga petrophila (strain ATCC BAA-488 / DSM 13995 / JCM 10881 / RKU-1) protein is Sugar fermentation stimulation protein homolog.